The following is a 315-amino-acid chain: MDLRQFLMCLSLCTAFALSKPTEKKDRVHHEPQLSDKVHNDAQSFDYDHDAFLGAEEAKTFDQLTPEESKERLGKIVSKIDGDKDGFVTVDELKDWIKFAQKRWIYEDVERQWKGHDLNEDGLVSWEEYKNATYGYVLDDPDPDDGFNYKQMMVRDERRFKMADKDGDLIATKEEFTAFLHPEEYDYMKDIVVQETMEDIDKNADGFIDLEEYIGDMYSHDGNTDEPEWVKTEREQFVEFRDKNRDGKMDKEETKDWILPSDYDHAEAEARHLVYESDQNKDGKLTKEEIVDKYDLFVGSQATDFGEALVRHDEF.

Residues 1 to 19 (MDLRQFLMCLSLCTAFALS) form the signal peptide. Ser-44 carries the phosphoserine modification. A Phosphotyrosine modification is found at Tyr-47. Position 65 is a phosphothreonine (Thr-65). 6 EF-hand domains span residues 68-103 (ESKE…AQKR), 104-139 (WIYE…YVLD), 151-186 (QMMV…EEYD), 188-223 (MKDI…HDGN), 229-264 (WVKT…SDYD), and 265-300 (HAEA…FVGS). Ser-69 is modified (phosphoserine; by FAM20C). Positions 81, 83, 85, 92, 117, 119, 121, and 128 each coordinate Ca(2+). Asn-131 is a glycosylation site (N-linked (GlcNAc...) (complex) asparagine). Asp-164 serves as a coordination point for Ca(2+). Residue Lys-165 is modified to N6-acetyllysine. Asp-166, Asp-168, Glu-175, Asp-201, Asn-203, Asp-205, Glu-212, Asp-242, Asn-244, Asp-246, Lys-248, and Glu-253 together coordinate Ca(2+). Thr-254 bears the Phosphothreonine mark. Phosphoserine is present on residues Ser-261 and Ser-277. Residues Asp-278, Asn-280, Asp-282, Lys-284, and Glu-289 each contribute to the Ca(2+) site. The Prevents secretion from ER motif lies at 312–315 (HDEF).

Belongs to the CREC family. In terms of assembly, interacts with GGCX. Ubiquitously expressed. Expressed at high levels in heart, placenta and skeletal muscle, at lower levels in lung, kidney and pancreas and at very low levels in brain and liver.

The protein resides in the endoplasmic reticulum membrane. The protein localises to the golgi apparatus. It is found in the secreted. Its subcellular location is the melanosome. It localises to the sarcoplasmic reticulum lumen. Its function is as follows. Involved in regulation of vitamin K-dependent carboxylation of multiple N-terminal glutamate residues. Seems to inhibit gamma-carboxylase GGCX. Binds 7 calcium ions with a low affinity. The protein is Calumenin (CALU) of Homo sapiens (Human).